Here is an 89-residue protein sequence, read N- to C-terminus: C-C motif chemokine 18 (89 aa).

An N-terminal signal peptide occupies residues 1-20 (MKGLAAALLVLVCTMALCSC). 2 disulfides stabilise this stretch: Cys30–Cys54 and Cys31–Cys70.

It belongs to the intercrine beta (chemokine CC) family. Post-translationally, the Cys-30/Cys-54 disulfide bond is required for activity. Expressed at high levels in lung, lymph nodes, placenta, bone marrow, dendritic cells present in germinal centers and T-cell areas of secondary lymphoid organs and macrophages derived from peripheral blood monocytes. Not expressed by peripheral blood monocytes and a monocyte-to-macrophage differentiation is a prerequisite for expression. Expressed in synovial fluids from patients with rheumatoid and septic arthritis and in ovarian carcinoma ascitic fluid.

It is found in the secreted. Its function is as follows. Chemotactic factor that attracts lymphocytes but not monocytes or granulocytes. May be involved in B-cell migration into B-cell follicles in lymph nodes. Attracts naive T-lymphocytes toward dendritic cells and activated macrophages in lymph nodes, has chemotactic activity for naive T-cells, CD4+ and CD8+ T-cells and thus may play a role in both humoral and cell-mediated immunity responses. This Homo sapiens (Human) protein is C-C motif chemokine 18 (CCL18).